A 165-amino-acid chain; its full sequence is REP-associated tyrosine transposase (165 aa).

Belongs to the transposase 17 family. RAYT subfamily. In terms of assembly, monomer.

Its activity is regulated as follows. Cleavage occurs in the presence of magnesium, but is much more pronounced with manganese. In terms of biological role, transposase that is always flanked by repeated extragenic palindrome (REP) sequences, which are clustered in structures called bacterial interspersed mosaic elements (BIMEs). RayT catalyzes cleavage and recombination of BIMEs. Binds REP sequences and cleaves BIMEs both upstream and downstream of the REP sequence. Could be important in the creation of BIME variability and amplification. This chain is REP-associated tyrosine transposase, found in Escherichia coli (strain K12).